The sequence spans 250 residues: Probable dihydroorotate dehydrogenase B (NAD(+)), electron transfer subunit (250 aa).

The FAD-binding FR-type domain occupies 1-89 (MNRITVDQVR…RGPYGNGFQI (89 aa)). The [2Fe-2S] cluster site is built by Cys-200, Cys-205, Cys-208, and Cys-216.

Belongs to the PyrK family. In terms of assembly, heterotetramer of 2 PyrK and 2 PyrD type B subunits. The cofactor is [2Fe-2S] cluster. FAD is required as a cofactor.

Its pathway is pyrimidine metabolism; UMP biosynthesis via de novo pathway; orotate from (S)-dihydroorotate (NAD(+) route): step 1/1. In terms of biological role, responsible for channeling the electrons from the oxidation of dihydroorotate from the FMN redox center in the PyrD type B subunit to the ultimate electron acceptor NAD(+). The chain is Probable dihydroorotate dehydrogenase B (NAD(+)), electron transfer subunit from Thermoplasma acidophilum (strain ATCC 25905 / DSM 1728 / JCM 9062 / NBRC 15155 / AMRC-C165).